Reading from the N-terminus, the 247-residue chain is MNLHALCLLLLLLGSSTKAGEIIGGTECIPHSRPYMAYLEIVTSDNYLSACSGFLIRRNFVLTAAHCAGRSITVLLGAHNKTYKEDTWQKLEVEKQFIHPNYDKRLVLHDIMLLKLKEKAKLTLGVGTLPLSANFNFIPPGRMCRAVGWGRTNVNEPASDTLQEVKMRLQEPQSCKHFTSFQHKSQLCVGNPKKMQNVYKGDSGGPLLCAGIAQGIASYVHPNAKPPAVFTRISHYRPWINKILREN.

The signal sequence occupies residues 1–19; the sequence is MNLHALCLLLLLLGSSTKA. Residues 20–21 constitute a propeptide, activation peptide; the sequence is GE. The Peptidase S1 domain maps to 22–245; sequence IIGGTECIPH…YRPWINKILR (224 aa). C51 and C67 are disulfide-bonded. The active-site Charge relay system is the H66. An N-linked (GlcNAc...) asparagine glycan is attached at N80. The active-site Charge relay system is the D110. Disulfide bonds link C144–C209 and C175–C188. S203 functions as the Charge relay system in the catalytic mechanism.

Belongs to the peptidase S1 family. Granzyme subfamily. Mast cells.

It localises to the secreted. It is found in the cytoplasmic granule. The catalysed reaction is Preferential cleavage: Phe-|-Xaa &gt; Tyr-|-Xaa &gt; Trp-|-Xaa &gt; Leu-|-Xaa.. Its function is as follows. Major secreted protease of mast cells with suspected roles in vasoactive peptide generation, extracellular matrix degradation, and regulation of gland secretion. In Rattus norvegicus (Rat), this protein is Chymase (Cma1).